A 554-amino-acid chain; its full sequence is MSVCVSPLVQATILMTEESLTCPQCPKSFSSTKLLQQHQQMFHTDKSVLLSLKSTDAPVGMDRAFICETCGKAFRFRSNLAEHRSVHTALKPYVCKFCGKSSRLKGNLTKHILKHHKKEQNEAIAKDDIIVKKAPKIVTKDNGPTTNGSTPTTSTATPSVITVSSALASSNGHNNNNNNHAVNNNLRTIKMELEDPDYNLIAKSAPTPVVSKIVATHTVTPRSRPTPKDIKEILETIAPSVGVSETPEEMCLLPKDASSESDRSVLISLGFDFGSTLSLNHQQLQQVVRELKGELSISPDTVQSDHSDDFEQDSPPPMAIANISTVGGEATLAAMIVAATNASGQRGDGTPDSTDTQKGCSPQRELSPESDPSTSSGDSCPSPPKMLHCKECGTLVRKSSHLPIHMTMSHGYPPPLVAAPVEEKPAPEQPVNASSLHNELRVISNAICELKAQQAATPRVEQALTYIDSRVGKLERSLETALNSIYTLVQLQTGMTSSVNRLREDSTKNFSDLKTRMEMSLSPIKPFQQRFSRERSSSSSVERSPSRERSRSPL.

3 C2H2-type zinc fingers span residues leucine 20–histidine 43, phenylalanine 65–histidine 87, and tyrosine 93–histidine 116. Disordered regions lie at residues lysine 136–proline 158, serine 298–alanine 319, and alanine 342–proline 383. Over residues asparagine 142–proline 158 the composition is skewed to low complexity. 2 stretches are compositionally biased toward polar residues: residues proline 351 to cysteine 360 and serine 370 to serine 379. A C2H2-type 4 zinc finger spans residues leucine 387–histidine 410. A disordered region spans residues arginine 516–leucine 554. The span at serine 544–leucine 554 shows a compositional bias: basic and acidic residues.

Expressed mainly in body wall muscles and ventral cord motoneurons.

It is found in the nucleus. The protein localises to the nucleus speckle. In terms of biological role, plays a role in regulating synaptic function, probably by modulation of endocytosis. May be dispensable in muscle for normal locomotion. May be involved in post-transcriptional mRNA processing, in parallel with unc-75. This chain is Zinc finger protein syd-9, found in Caenorhabditis elegans.